The following is a 197-amino-acid chain: MAVSKLTLAATSGKSCKILLGLRLLAFSATLSAAIVMGLNKETKTFIVGKVGNTPIQATFTAKFDHTPAFVFFVVANAMVSFHNLLMIALQIFGGKMEFTGFRLLSVAILDMLNVTLISAAANAAAFMAEVGKNGNKHARWDKICDRFATYCDHGAGALIAAFAGVILMLIISAASISRLVQPNKCCSTTASPSVVP.

Position 2 is an N-acetylalanine (Ala2). Topologically, residues 2–17 (AVSKLTLAATSGKSCK) are cytoplasmic. A helical membrane pass occupies residues 18–38 (ILLGLRLLAFSATLSAAIVMG). The Extracellular segment spans residues 39–69 (LNKETKTFIVGKVGNTPIQATFTAKFDHTPA). A helical membrane pass occupies residues 70 to 90 (FVFFVVANAMVSFHNLLMIAL). The Cytoplasmic portion of the chain corresponds to 91 to 106 (QIFGGKMEFTGFRLLS). Residues 107–127 (VAILDMLNVTLISAAANAAAF) traverse the membrane as a helical segment. At 128-156 (MAEVGKNGNKHARWDKICDRFATYCDHGA) the chain is on the extracellular side. Residues 157 to 177 (GALIAAFAGVILMLIISAASI) traverse the membrane as a helical segment. At 178–197 (SRLVQPNKCCSTTASPSVVP) the chain is on the cytoplasmic side.

Belongs to the Casparian strip membrane proteins (CASP) family. As to quaternary structure, homodimer and heterodimers.

The protein localises to the cell membrane. The protein is CASP-like protein 1B1 of Arabidopsis thaliana (Mouse-ear cress).